The primary structure comprises 41 residues: uncharacterized protein (41 aa).

This is an uncharacterized protein from Archaeoglobus fulgidus (strain ATCC 49558 / DSM 4304 / JCM 9628 / NBRC 100126 / VC-16).